Consider the following 203-residue polypeptide: Probable cytochrome c oxidase subunit 3 (203 aa).

A run of 5 helical transmembrane segments spans residues Ile-30–Ala-50, Val-71–Ala-91, Ile-96–Gly-116, Ala-143–Val-163, and Ile-179–Ile-199.

This sequence belongs to the cytochrome c oxidase subunit 3 family.

It localises to the cell membrane. It carries out the reaction 4 Fe(II)-[cytochrome c] + O2 + 8 H(+)(in) = 4 Fe(III)-[cytochrome c] + 2 H2O + 4 H(+)(out). The sequence is that of Probable cytochrome c oxidase subunit 3 (ctaE) from Mycobacterium bovis (strain ATCC BAA-935 / AF2122/97).